Here is a 963-residue protein sequence, read N- to C-terminus: Spliceosome associated factor 3, U4/U6 recycling protein (963 aa).

A compositionally biased stretch (low complexity) spans 1–11 (MATAAATSASE). 2 disordered regions span residues 1–36 (MATAAATSASEPEAESKAGPKADGEEDEVKAARTRR) and 49–86 (KTMGPGWDQQEEGVSESDGDEYAMASSAESSPGEYEWE). Ala-2 bears the N-acetylalanine mark. The segment at 2–351 (ATAAATSASE…LVPDLWIRYS (350 aa)) is mediates interaction with PRPF3. Ser-10 and Ser-16 each carry phosphoserine. Over residues 14–23 (AESKAGPKAD) the composition is skewed to basic and acidic residues. Residues 21–46 (KADGEEDEVKAARTRRKVLSRAVAAA) are a coiled coil. Over residues 57–69 (QQEEGVSESDGDE) the composition is skewed to acidic residues. Residues 82-110 (EYEWEYDEEEEKNQLEIERLEEQLSINVY) adopt a coiled-coil conformation. HAT repeat units follow at residues 126–158 (GELTKVRMARQKMSEIFPLTEELWLEWLHDEIS), 164–195 (LDREHVYDLFEKAVKDYICPNIWLEYGQYSVG), 201–237 (GGLEKVRSVFERALSSVGLHMSKGLALWEAYREFESA), 242–275 (ARLEKVHSLFRRQLAIPLYDMEATFAEYEEWSED), 324–356 (GDPARIQLIFERALVENCLVPDLWIRYSQYLDR), 359–391 (KVKDLVLSVHNRAIRNCPWTVALWSRYLLAMER), 394–430 (VDHQVISVTFEKALNAGFIQATDYVEIWQAYLDYLRR), and 487–520 (NNMQKARELWDSIMTRGNAKYANMWLEYYNLERA). Ser-215 carries the phosphoserine modification. The segment at 487 to 520 (NNMQKARELWDSIMTRGNAKYANMWLEYYNLERA) is required for interaction with USP4. The segment at 537–953 (CTSDYPEHVC…AATEAPKMSN (417 aa)) is necessary and sufficient for U6 snRNA binding. The stretch at 559-619 (LEDWDIAVQK…ALKKKKKIRG (61 aa)) forms a coiled coil. The required for nuclear localization stretch occupies residues 600–670 (QRKRARAEKK…EVAPGPAGKC (71 aa)). The Nuclear localization signal signature appears at 601-608 (RKRARAEK). Residues 608–619 (KKALKKKKKIRG) show a composition bias toward basic and acidic residues. The interval 608 to 712 (KKALKKKKKI…SITVFVSNLP (105 aa)) is disordered. The segment covering 620–635 (PEKRGADEDDEKEWGD) has biased composition (basic residues). The span at 644–657 (RRRVENSIPAAGET) shows a compositional bias: acidic residues. Ser-650 carries the phosphoserine modification. Thr-657 is modified (phosphothreonine). Over residues 695–712 (VLHDSSKDSITVFVSNLP) the composition is skewed to basic and acidic residues. Residues 704-782 (ITVFVSNLPY…RPMFVSPCVD (79 aa)) form the RRM 1 domain. Phosphoserine occurs at positions 769, 795, and 852. The RRM 2 domain occupies 801-878 (HKLFISGLPF…NVIKVAISNP (78 aa)). Residues 900–909 (PQTYGARGKG) are compositionally biased toward basic and acidic residues. Arg-906 carries the post-translational modification Omega-N-methylarginine.

As to quaternary structure, component of the 7SK snRNP complex at least composed of P-TEFb (composed of CDK9 and CCNT1/cyclin-T1), HEXIM1, HEXIM2, BCDIN3, SART3 proteins and 7SK and U6 snRNAs. Interacts with AGO1 and AGO2. Interacts with PRPF3 and USP4; the interaction with PRPF3 is direct and recruits USP4 to its substrate PRPF3. Interacts with USP15; the interaction is direct.

The protein resides in the nucleus. It is found in the nucleoplasm. It localises to the cajal body. Its subcellular location is the nucleus speckle. The protein localises to the cytoplasm. U6 snRNP-binding protein that functions as a recycling factor of the splicing machinery. Promotes the initial reassembly of U4 and U6 snRNPs following their ejection from the spliceosome during its maturation. Also binds U6atac snRNPs and may function as a recycling factor for U4atac/U6atac spliceosomal snRNP, an initial step in the assembly of U12-type spliceosomal complex. The U12-type spliceosomal complex plays a role in the splicing of introns with non-canonical splice sites. May also function as a substrate-targeting factor for deubiquitinases like USP4 and USP15. Recruits USP4 to ubiquitinated PRPF3 within the U4/U5/U6 tri-snRNP complex, promoting PRPF3 deubiquitination and thereby regulating the spliceosome U4/U5/U6 tri-snRNP spliceosomal complex disassembly. May also recruit the deubiquitinase USP15 to histone H2B and mediate histone deubiquitination, thereby regulating gene expression and/or DNA repair. May play a role in hematopoiesis probably through transcription regulation of specific genes including MYC. The polypeptide is Spliceosome associated factor 3, U4/U6 recycling protein (Pongo abelii (Sumatran orangutan)).